Consider the following 1720-residue polypeptide: Merozoite surface protein 1 (1720 aa).

An N-terminal signal peptide occupies residues 1–19 (MKIIFFLCSFLFFIINTQC). Positions 63–112 (ASAQSGASAQSGASAQSGASAQSGASAQSGASAQSGTSGPSGPSGTSPSS) are enriched in low complexity. Residues 63–137 (ASAQSGASAQ…PPADASDSDA (75 aa)) form a disordered region. Residues 113–122 (RSNTLPRSNT) are compositionally biased toward polar residues. The segment covering 123-132 (SSGASPPADA) has biased composition (low complexity). A coiled-coil region spans residues 474-519 (INNIKKKIDLEEKNINHTKEQNKKLLEDYEKSKKDYEELLEKFYEM). 4 disordered regions span residues 723–775 (SETT…PPKE), 908–955 (TGTS…SGPA), 1249–1278 (TPPQ…TQIP), and 1470–1491 (KEKF…DEQK). Residues 743–753 (EVTEETEETEE) show a composition bias toward acidic residues. Low complexity predominate over residues 908-946 (TGTSSTSSPGNTTVNTAQSATHSNSQNQQSNASSTNTQN). The span at 1264-1278 (VSGSSGSTKEETQIP) shows a compositional bias: polar residues. The segment covering 1475–1484 (SSPPTTPPSP) has biased composition (pro residues). 2 EGF-like domains span residues 1611–1651 (HQCV…VENP) and 1652–1693 (NPTC…YPLF). 6 disulfides stabilise this stretch: C1613–C1624, C1618–C1634, C1636–C1647, C1655–C1668, C1662–C1682, and C1684–C1698. S1699 carries the GPI-anchor amidated serine lipid modification. Residues 1700–1720 (SSNFLGISFLLILMLILYSFI) constitute a propeptide, removed in mature form.

Forms a complex composed of subunits p83, p30, p38, and p42 which remain non-covalently associated; the complex is formed at the merozoite surface prior to egress from host erythrocytes. Forms a complex composed of processed MSP1 subunits, MSP6 subunit p36 and MSP7; the complex is formed at the merozoite surface prior to egress from host erythrocytes. Within the complex, interacts (via subunit p38) with MSP6 subunit p36 and (via subunits p83, p30 and p38) with MSP7 (via subunit p22). Forms a complex composed of MSP1, MSP6, DBLMSP1 and DBLMSP2. Within the complex, interacts (via subunit p38) with DBLMSP1 and DBLMSP2. Forms a complex composed of MSP1, and rhoptry proteins RhopH3, RAP1 and CLAG9/RhopH3. Within the complex, interacts (via subunits p42 and p19) with RhopH3 (via C-terminus). Forms a complex composed of MSP1, MSP6, MSP7, MSP9 and MSP3; within the complex, MSP6 and MSP9 mediate the binding to the host erythrocyte. Interacts (via subunits p19 and p42) with MSP9; the interaction is direct; MSP1 subunits p19 or p42, and MSP9 form a co-ligand complex that interacts with host SLC4A1/Band 3 protein. May interact with PFD6. Interacts with host spectrin. In terms of assembly, interacts with host glycophorin GYPA in a sialic acid-independent manner. As to quaternary structure, interacts with host proinflammatory cytokine S100P; the interaction blocks S100P inflammatory and chemotactic activities. Interacts with host SLC4A1/Band 3 (via 5ABC region) on the host erythrocyte surface in a sialic acid-independent manner. In terms of processing, the p190 precursor is cleaved by SUB1 prior to merozoite egress into 4 subunits p83, p30, p38, and p42 which remain non-covalently associated. SUB1-mediated proteolytic cleavage occurs in an orderly manner; the first cleavage occurs at the p30/p38 site, followed by cleavage at the p83/p30 site, in the 3D7 strain a second cleavage occurs at the N-terminus of p83, the last cleavage occurs at the p38/p42 site. The order of cleavage is essential for parasite viability. SUB1-mediated processing is essential for merozoite egress. In a second processing step during erythrocyte invasion, p42 is cleaved by SUB2 into p33 and p19; the latter remains attached to the merozoite surface via its GPI-anchor and is endocytosed during the subsequent ring stage.

It localises to the cell membrane. Its subcellular location is the secreted. It is found in the vacuole membrane. Functionally, during the asexual blood stage, involved in merozoite egress from host erythrocytes possibly via its interaction with the host cytoskeleton protein spectrin resulting in the destabilization of the host cytoskeleton and thus leading to erythrocyte cell membrane rupture. Involved in the binding to host erythrocytes and is required for host erythrocyte invasion. Its function is as follows. By binding to host proinflammatory cytokine S100P may interfere with host immune responses. Involved in merozoite invasion of host erythrocytes. May play a role in the biogenesis and/or function of the food vacuole during the intraerythrocytic development. The protein is Merozoite surface protein 1 of Plasmodium falciparum (isolate 3D7).